The chain runs to 807 residues: Glucocorticoid receptor (807 aa).

Disordered stretches follow at residues 1–47 (MDQG…LPSP), 246–284 (TDVNGTDQQHPLQHHQHQQQQHRHLLQHQQHQLHHQHQQ), and 412–438 (FSVSFSSSSPRTGENSSSAVPGLSKPS). A modulating region spans residues 1–444 (MDQGGLKRNC…SKPSGPTHKI (444 aa)). Residues 257–282 (LQHHQHQQQQHRHLLQHQQHQLHHQH) show a composition bias toward basic residues. The span at 412-421 (FSVSFSSSSP) shows a compositional bias: low complexity. 2 NR C4-type zinc fingers span residues 445-465 (CLVCSDEASGCHYGVVTCGSC) and 490-514 (CAGRNDCIIDKIRRKNCPACRFRKC). The nuclear receptor DNA-binding region spans 445 to 519 (CLVCSDEASG…RFRKCLQAGM (75 aa)). Residues 520-553 (NLEARKNKKLIKMKVHRPTGSAEPISNMPVPVIP) are hinge. The 235-residue stretch at 554 to 788 (RMPQLVPTML…FPEMLAEIIT (235 aa)) folds into the NR LBD domain.

This sequence belongs to the nuclear hormone receptor family. NR3 subfamily. Heteromultimeric cytoplasmic complex with HSP90. Upon ligand binding the complex undergoes a conformation change and moves to the nucleus, where it dissociates. Binds to DNA as a homodimer, and as heterodimer with NR3C2. Interaction with numerous other transcription factors modulates transcription activation.

The protein localises to the cytoplasm. It is found in the nucleus. The protein resides in the mitochondrion. It localises to the cytoskeleton. Its subcellular location is the spindle. The protein localises to the microtubule organizing center. It is found in the centrosome. Receptor for glucocorticoids (GC). Has a dual mode of action: as a transcription factor that binds to glucocorticoid response elements (GRE), both for nuclear and mitochondrial DNA, and as a modulator of other transcription factors. Affects inflammatory responses, cellular proliferation and differentiation in target tissues. Involved in chromatin remodeling. Plays a role in rapid mRNA degradation by binding to the 5' UTR of target mRNAs and interacting with PNRC2 in a ligand-dependent manner which recruits the RNA helicase UPF1 and the mRNA-decapping enzyme DCP1A, leading to RNA decay. Could act as a coactivator for STAT5-dependent transcription upon growth hormone (GH) stimulation and could reveal an essential role of hepatic GR in the control of body growth. Mediates glucocorticoid-induced apoptosis. Promotes accurate chromosome segregation during mitosis. May act as a tumor suppressor. May play a negative role in adipogenesis through the regulation of lipolytic and antilipogenic gene expression. The sequence is that of Glucocorticoid receptor (nr3c1) from Paralichthys olivaceus (Bastard halibut).